The primary structure comprises 144 residues: Bacilliredoxin BCE33L1972 (144 aa).

The protein belongs to the bacilliredoxin family.

This Bacillus cereus (strain ZK / E33L) protein is Bacilliredoxin BCE33L1972.